The following is a 760-amino-acid chain: Xaa-Pro dipeptidyl-peptidase (760 aa).

Active-site charge relay system residues include serine 349, aspartate 469, and histidine 499.

Belongs to the peptidase S15 family. As to quaternary structure, homodimer.

Its subcellular location is the cytoplasm. The enzyme catalyses Hydrolyzes Xaa-Pro-|- bonds to release unblocked, N-terminal dipeptides from substrates including Ala-Pro-|-p-nitroanilide and (sequentially) Tyr-Pro-|-Phe-Pro-|-Gly-Pro-|-Ile.. Functionally, removes N-terminal dipeptides sequentially from polypeptides having unsubstituted N-termini provided that the penultimate residue is proline. In Streptococcus pyogenes serotype M3 (strain ATCC BAA-595 / MGAS315), this protein is Xaa-Pro dipeptidyl-peptidase.